The following is a 217-amino-acid chain: Large ribosomal subunit protein uL29m (217 aa).

The protein belongs to the universal ribosomal protein uL29 family. In terms of assembly, component of the mitochondrial large ribosomal subunit. Mature mitochondrial ribosomes consist of a small (37S) and a large (54S) subunit. The 37S subunit contains at least 33 different proteins and 1 molecule of RNA (15S). The 54S subunit contains at least 45 different proteins and 1 molecule of RNA (21S).

It localises to the mitochondrion. The sequence is that of Large ribosomal subunit protein uL29m (mrpl4) from Aspergillus fumigatus (strain ATCC MYA-4609 / CBS 101355 / FGSC A1100 / Af293) (Neosartorya fumigata).